We begin with the raw amino-acid sequence, 214 residues long: Ribosomal RNA large subunit methyltransferase E (214 aa).

Residues G68, W70, D88, D104, and D129 each coordinate S-adenosyl-L-methionine. K169 acts as the Proton acceptor in catalysis.

This sequence belongs to the class I-like SAM-binding methyltransferase superfamily. RNA methyltransferase RlmE family.

The protein resides in the cytoplasm. It catalyses the reaction uridine(2552) in 23S rRNA + S-adenosyl-L-methionine = 2'-O-methyluridine(2552) in 23S rRNA + S-adenosyl-L-homocysteine + H(+). In terms of biological role, specifically methylates the uridine in position 2552 of 23S rRNA at the 2'-O position of the ribose in the fully assembled 50S ribosomal subunit. This chain is Ribosomal RNA large subunit methyltransferase E, found in Magnetococcus marinus (strain ATCC BAA-1437 / JCM 17883 / MC-1).